Reading from the N-terminus, the 331-residue chain is Isopenicillin N synthase (331 aa).

Residues Arg-87, Tyr-91, Ser-183, and Tyr-189 each coordinate isopenicillin N. Residues Arg-87, Tyr-91, Ser-183, Tyr-189, His-214, and Asp-216 each contribute to the N-[(5S)-5-amino-5-carboxypentanoyl]-L-cysteinyl-D-valine site. In terms of domain architecture, Fe2OG dioxygenase spans 176–288 (KKEDALSSVV…RQSLPFFVNL (113 aa)). Positions 214, 216, and 270 each coordinate Fe(2+). Arg-279 serves as a coordination point for 2-oxoglutarate. Ser-281 contributes to the isopenicillin N binding site. Ser-281 serves as a coordination point for N-[(5S)-5-amino-5-carboxypentanoyl]-L-cysteinyl-D-valine.

This sequence belongs to the iron/ascorbate-dependent oxidoreductase family. As to quaternary structure, monomer. Fe(2+) serves as cofactor.

It is found in the cytoplasm. Its subcellular location is the cytosol. It catalyses the reaction N-[(5S)-5-amino-5-carboxypentanoyl]-L-cysteinyl-D-valine + O2 = isopenicillin N + 2 H2O. The protein operates within antibiotic biosynthesis; penicillin G biosynthesis; penicillin G from L-alpha-aminoadipate and L-cysteine and L-valine: step 2/3. In terms of biological role, isopenicillin N synthase; part of the gene cluster that mediates the biosynthesis of penicillin, the world's most important antibiotic. IpnA catalyzes the cyclization of the tripeptide N-[(5S)-5-amino-5-carboxypentanoyl]-L-cysteinyl-D-valine (LLD-ACV or ACV) to form isopenicillin N (IPN) that contains the beta-lactam nucleus. The penicillin biosynthesis occurs via 3 enzymatic steps, the first corresponding to the production of the tripeptide N-[(5S)-5-amino-5-carboxypentanoyl]-L-cysteinyl-D-valine (LLD-ACV or ACV) by the NRPS acvA. The tripeptide ACV is then cyclized to isopenicillin N (IPN) by the isopenicillin N synthase ipnA that forms the beta-lactam nucleus. Finally, the alpha-aminoadipyl side chain is exchanged for phenylacetic acid by the isopenicillin N acyltransferase aatA to yield penicillin in the peroxisomal matrix. The sequence is that of Isopenicillin N synthase from Penicillium chrysogenum (Penicillium notatum).